A 637-amino-acid chain; its full sequence is Probable ATP-binding protein YheS (637 aa).

ABC transporter domains are found at residues isoleucine 2–glutamine 246 and leucine 313–asparagine 527. ATP is bound by residues glycine 34 to serine 41 and glycine 345 to serine 352. The tract at residues glutamine 523 to proline 559 is disordered. Residues alanine 542–leucine 553 are compositionally biased toward basic and acidic residues.

The protein belongs to the ABC transporter superfamily. ABCF family. YheS subfamily.

Functionally, genetic data indicate it may be involved in ribosome assembly or function. This is Probable ATP-binding protein YheS (yheS) from Escherichia coli O157:H7.